A 433-amino-acid chain; its full sequence is V-type ATP synthase beta chain (433 aa).

The protein belongs to the ATPase alpha/beta chains family.

Its function is as follows. Produces ATP from ADP in the presence of a proton gradient across the membrane. The V-type beta chain is a regulatory subunit. The polypeptide is V-type ATP synthase beta chain (Borrelia turicatae (strain 91E135)).